Consider the following 66-residue polypeptide: Metallothionein-like protein type 3 (66 aa).

It belongs to the metallothionein superfamily. Type 15 family.

Metallothioneins have a high content of cysteine residues that bind various heavy metals. The polypeptide is Metallothionein-like protein type 3 (MT2) (Malus domestica (Apple)).